The following is a 122-amino-acid chain: UPF0102 protein Cgl2031/cg2228 (122 aa).

The protein belongs to the UPF0102 family.

This Corynebacterium glutamicum (strain ATCC 13032 / DSM 20300 / JCM 1318 / BCRC 11384 / CCUG 27702 / LMG 3730 / NBRC 12168 / NCIMB 10025 / NRRL B-2784 / 534) protein is UPF0102 protein Cgl2031/cg2228.